We begin with the raw amino-acid sequence, 138 residues long: Small ribosomal subunit protein uS11 (138 aa).

Low complexity predominate over residues 1-12; that stretch reads MPPAKKAAAAPK. The segment at 1–27 is disordered; sequence MPPAKKAAAAPKKGQKTRRREKKNVPH. Residues 13–22 are compositionally biased toward basic residues; that stretch reads KGQKTRRREK.

Belongs to the universal ribosomal protein uS11 family. As to quaternary structure, part of the 30S ribosomal subunit. Interacts with proteins S7 and S18. Binds to IF-3.

Its function is as follows. Located on the platform of the 30S subunit, it bridges several disparate RNA helices of the 16S rRNA. Forms part of the Shine-Dalgarno cleft in the 70S ribosome. In Mycolicibacterium paratuberculosis (strain ATCC BAA-968 / K-10) (Mycobacterium paratuberculosis), this protein is Small ribosomal subunit protein uS11.